The following is a 455-amino-acid chain: Hydroxymethylglutaryl-CoA synthase 2 (455 aa).

Catalysis depends on E86, which acts as the Proton donor/acceptor. The active-site Acyl-thioester intermediate is C120. C120, T161, S211, H255, K264, N329, and S363 together coordinate (3S)-3-hydroxy-3-methylglutaryl-CoA. H255 acts as the Proton donor/acceptor in catalysis.

This sequence belongs to the thiolase-like superfamily. HMG-CoA synthase family.

It carries out the reaction acetoacetyl-CoA + acetyl-CoA + H2O = (3S)-3-hydroxy-3-methylglutaryl-CoA + CoA + H(+). Its pathway is metabolic intermediate biosynthesis; (R)-mevalonate biosynthesis; (R)-mevalonate from acetyl-CoA: step 2/3. This enzyme condenses acetyl-CoA with acetoacetyl-CoA to form HMG-CoA, which is the substrate for HMG-CoA reductase. In Blattella germanica (German cockroach), this protein is Hydroxymethylglutaryl-CoA synthase 2 (HMGCS-2).